A 372-amino-acid polypeptide reads, in one-letter code: Putative 26S proteasome regulatory subunit homolog MTBMA_c13930 (372 aa).

164–171 contributes to the ATP binding site; it reads GSPGTGKT.

It belongs to the AAA ATPase family.

In terms of biological role, the 26S proteasome is involved in the ATP-dependent degradation of ubiquitinated proteins. The regulatory (or ATPase) complex confers ATP dependency and substrate specificity to the 26S complex. This is Putative 26S proteasome regulatory subunit homolog MTBMA_c13930 from Methanothermobacter marburgensis (strain ATCC BAA-927 / DSM 2133 / JCM 14651 / NBRC 100331 / OCM 82 / Marburg) (Methanobacterium thermoautotrophicum).